The primary structure comprises 237 residues: Small ribosomal subunit protein eS4 (237 aa).

In terms of domain architecture, S4 RNA-binding spans 38-110; it reads LPLAVVVRDV…EAKYYDLKPI (73 aa).

This sequence belongs to the eukaryotic ribosomal protein eS4 family.

This Pyrobaculum calidifontis (strain DSM 21063 / JCM 11548 / VA1) protein is Small ribosomal subunit protein eS4.